The primary structure comprises 344 residues: Heat-inducible transcription repressor HrcA (344 aa).

Belongs to the HrcA family.

Negative regulator of class I heat shock genes (grpE-dnaK-dnaJ and groELS operons). Prevents heat-shock induction of these operons. The chain is Heat-inducible transcription repressor HrcA from Streptococcus agalactiae serotype III (strain NEM316).